Reading from the N-terminus, the 829-residue chain is Probable beta-glucosidase H (829 aa).

Asparagine 13 carries an N-linked (GlcNAc...) asparagine glycan. Residue aspartate 225 is part of the active site. Asparagine 304, asparagine 473, asparagine 602, asparagine 627, and asparagine 664 each carry an N-linked (GlcNAc...) asparagine glycan. Residues 389-548 (RMLSNAVIHF…DPEQMVANAV (160 aa)) enclose the PA14 domain.

This sequence belongs to the glycosyl hydrolase 3 family.

The protein localises to the secreted. It catalyses the reaction Hydrolysis of terminal, non-reducing beta-D-glucosyl residues with release of beta-D-glucose.. Its pathway is glycan metabolism; cellulose degradation. In terms of biological role, beta-glucosidases are one of a number of cellulolytic enzymes involved in the degradation of cellulosic biomass. Catalyzes the last step releasing glucose from the inhibitory cellobiose. This chain is Probable beta-glucosidase H (bglH), found in Aspergillus fumigatus (strain ATCC MYA-4609 / CBS 101355 / FGSC A1100 / Af293) (Neosartorya fumigata).